The sequence spans 267 residues: Diphthine synthase (267 aa).

S-adenosyl-L-methionine is bound by residues leucine 9, aspartate 85, valine 88, 113 to 114 (SI), leucine 170, alanine 211, and histidine 236.

This sequence belongs to the diphthine synthase family. As to quaternary structure, homodimer.

It catalyses the reaction 2-[(3S)-amino-3-carboxypropyl]-L-histidyl-[translation elongation factor 2] + 3 S-adenosyl-L-methionine = diphthine-[translation elongation factor 2] + 3 S-adenosyl-L-homocysteine + 3 H(+). It functions in the pathway protein modification; peptidyl-diphthamide biosynthesis. In terms of biological role, S-adenosyl-L-methionine-dependent methyltransferase that catalyzes the trimethylation of the amino group of the modified target histidine residue in translation elongation factor 2 (EF-2), to form an intermediate called diphthine. The three successive methylation reactions represent the second step of diphthamide biosynthesis. This is Diphthine synthase from Methanococcoides burtonii (strain DSM 6242 / NBRC 107633 / OCM 468 / ACE-M).